We begin with the raw amino-acid sequence, 129 residues long: Small ribosomal subunit protein uS11 (129 aa).

The protein belongs to the universal ribosomal protein uS11 family. Part of the 30S ribosomal subunit. Interacts with proteins S7 and S18. Binds to IF-3.

Functionally, located on the platform of the 30S subunit, it bridges several disparate RNA helices of the 16S rRNA. Forms part of the Shine-Dalgarno cleft in the 70S ribosome. The chain is Small ribosomal subunit protein uS11 from Mannheimia succiniciproducens (strain KCTC 0769BP / MBEL55E).